The primary structure comprises 895 residues: Stonin-2 (895 aa).

3 disordered regions span residues 15–119 (WVSF…PPHK), 145–222 (SESS…APPV), and 234–280 (EDNE…KSTL). Basic and acidic residues predominate over residues 64–73 (SHSEQDDSSE). Residues 145–193 (SESSWTTHSEDTSSPSVAPSYTDLQLINTEEQASGRASGTDSTDNSSSL) show a composition bias toward polar residues. Pro residues predominate over residues 241–251 (PSPPVPSPKKP). A Phosphothreonine modification is found at Thr253. Ser278 and Ser299 each carry phosphoserine. Short sequence motifs (NPF) lie at residues 310 to 312 (NPF) and 326 to 328 (NPF). Residues 386–421 (QIDDPDPVGNTALPDDDPTASVELDAPSPASALSQP) form a disordered region. One can recognise an SHD domain in the interval 424-557 (GWPMMLRIPE…DLPVLSMDLS (134 aa)). One can recognise an MHD domain in the interval 565–872 (EEEITVDVRD…AHYSYKVEIE (308 aa)). Residue Ser759 is modified to Phosphoserine.

This sequence belongs to the Stoned B family. Interacts with the second C2 domain of synaptotagmins SYT1 and SYT2. Interacts with EPS15, EPS15R and ITSN1. Interacts indirectly with the AP-2 adapter complex. Interacts with TOR1A and COPS4; the interaction controls STON2 protein stability. In terms of processing, phosphorylated in vitro by PKD. Neddylated; deneddylated via its interaction with the COP9 signalosome (CSN) complex through TOR1A and COPS4. Post-translationally, ubiquitinated; leading to its degradation.

It localises to the cytoplasm. It is found in the membrane. The protein localises to the synapse. The protein resides in the synaptosome. Its function is as follows. Adapter protein involved in endocytic machinery. Involved in the synaptic vesicle recycling. May facilitate clathrin-coated vesicle uncoating. The sequence is that of Stonin-2 (Ston2) from Mus musculus (Mouse).